A 484-amino-acid chain; its full sequence is Glutamyl-tRNA(Gln) amidotransferase subunit B, mitochondrial (484 aa).

The protein belongs to the GatB/GatE family. GatB subfamily. In terms of assembly, subunit of the heterotrimeric GatFAB amidotransferase (AdT) complex, composed of A, B and F subunits.

It localises to the mitochondrion. It carries out the reaction L-glutamyl-tRNA(Gln) + L-glutamine + ATP + H2O = L-glutaminyl-tRNA(Gln) + L-glutamate + ADP + phosphate + H(+). Its function is as follows. Allows the formation of correctly charged Gln-tRNA(Gln) through the transamidation of misacylated Glu-tRNA(Gln) in the mitochondria. The reaction takes place in the presence of glutamine and ATP through an activated gamma-phospho-Glu-tRNA(Gln). The chain is Glutamyl-tRNA(Gln) amidotransferase subunit B, mitochondrial from Candida tropicalis (strain ATCC MYA-3404 / T1) (Yeast).